The primary structure comprises 146 residues: Hemoglobin subunit beta-1 (146 aa).

The 145-residue stretch at 2-146 folds into the Globin domain; sequence VWTNEERSII…VVSALGKQYH (145 aa). Residues H63 and H92 each contribute to the heme b site.

This sequence belongs to the globin family. In terms of assembly, hb1 is a heterotetramer of two alpha chains and two beta-1 chains. Red blood cells.

Involved in oxygen transport from gills to the various peripheral tissues. This is Hemoglobin subunit beta-1 (hbb1) from Pseudaphritis urvillii (Congolli).